A 465-amino-acid chain; its full sequence is UDP-N-acetylmuramate--L-alanine ligase (465 aa).

112–118 (GTHGKTT) contributes to the ATP binding site.

The protein belongs to the MurCDEF family.

The protein localises to the cytoplasm. The enzyme catalyses UDP-N-acetyl-alpha-D-muramate + L-alanine + ATP = UDP-N-acetyl-alpha-D-muramoyl-L-alanine + ADP + phosphate + H(+). Its pathway is cell wall biogenesis; peptidoglycan biosynthesis. Its function is as follows. Cell wall formation. This Burkholderia ambifaria (strain ATCC BAA-244 / DSM 16087 / CCUG 44356 / LMG 19182 / AMMD) (Burkholderia cepacia (strain AMMD)) protein is UDP-N-acetylmuramate--L-alanine ligase.